Here is a 374-residue protein sequence, read N- to C-terminus: Probable aminopeptidase YDR415C (374 aa).

An N-terminal signal peptide occupies residues 1 to 18 (MRIQSLFVLFNVAIIAWS). Zn(2+)-binding residues include H177, D196, E235, D262, and H340.

It belongs to the peptidase M28 family. M28E subfamily. The cofactor is Zn(2+).

The chain is Probable aminopeptidase YDR415C from Saccharomyces cerevisiae (strain ATCC 204508 / S288c) (Baker's yeast).